We begin with the raw amino-acid sequence, 1264 residues long: Regulator of G-protein signaling 22 (1264 aa).

Residues 565 to 587 (EEFSLSQPPKSPNKSPEVKTATQ) are disordered. Over residues 568–578 (SLSQPPKSPNK) the composition is skewed to polar residues. RGS domains follow at residues 852–980 (KFSD…AARQ) and 1021–1145 (AFRK…TDEN). The stretch at 1142-1174 (TDENIMSVLERRQEYNKQKKKLAVLEDEKSGKD) forms a coiled coil.

Interacts with GNA11, GNA12 and GNA13. In terms of tissue distribution, testis-specific. Expressed in Leydig cells and spermatogenic cells from the spermatogonia to spermatid stages (at protein level).

The protein localises to the cytoplasm. It is found in the nucleus. Functionally, inhibits signal transduction by increasing the GTPase activity of G protein alpha subunits thereby driving them into their inactive GDP-bound form. The chain is Regulator of G-protein signaling 22 (RGS22) from Homo sapiens (Human).